Consider the following 247-residue polypeptide: Mannose-P-dolichol utilization defect 1 protein (247 aa).

Ala2 bears the N-acetylalanine mark. A run of 7 helical transmembrane segments spans residues 37–57, 74–94, 100–120, 128–145, 151–171, 185–205, and 213–233; these read CLKI…SLLV, LSLQ…VYSI, FSSW…CFLV, VKGV…LVLL, LTVV…GRLL, LSAI…FTSI, and MAGT…QLLF. A PQ-loop 1 domain is found at 39 to 105; that stretch reads KILLSKGLGL…NNFPFSSWGE (67 aa). The region spanning 159–216 is the PQ-loop 2 domain; it reads ASNVPAVVVGRLLQAATNYHNGHTGQLSAITVFLLFGGSLARIFTSIQETGDPLMAGT.

Belongs to the MPDU1 (TC 2.A.43.3) family.

It is found in the membrane. Its function is as follows. Required for normal utilization of mannose-dolichol phosphate (Dol-P-Man) in the synthesis of N-linked and O-linked oligosaccharides and GPI anchors. In Homo sapiens (Human), this protein is Mannose-P-dolichol utilization defect 1 protein (MPDU1).